The sequence spans 214 residues: uncharacterized protein (214 aa).

A signal peptide spans 1-24 (MVTPHGILLLTITAAASLLWITFA). Positions 99–121 (APNDTQEQNSTRNKRDSESYTAT) are disordered. The segment covering 100–109 (PNDTQEQNST) has biased composition (polar residues).

Component of the acid-insoluble and acid-soluble organic matrix of the aragonitic skeleton (at protein level).

It localises to the secreted. This is an uncharacterized protein from Acropora millepora (Staghorn coral).